Consider the following 376-residue polypeptide: Serine-arginine protein 55 (376 aa).

Positions serine 4–glycine 74 constitute an RRM 1 domain. The segment at arginine 73 to proline 114 is disordered. Residues serine 79 to glycine 89 are compositionally biased toward basic and acidic residues. Residues tyrosine 120 to arginine 193 enclose the RRM 2 domain. Residue serine 165 is modified to Phosphoserine. Residues arginine 185–glycine 194 are compositionally biased toward basic and acidic residues. Residues arginine 185 to aspartate 376 are disordered. The segment covering arginine 196–arginine 205 has biased composition (gly residues). Basic residues-rich tracts occupy residues serine 215 to asparagine 263 and serine 271 to serine 283. The segment covering proline 284–serine 304 has biased composition (basic and acidic residues).

The protein belongs to the splicing factor SR family. Extensively phosphorylated on serine residues in the RS domain.

It localises to the nucleus. In terms of biological role, essential for development. May have a critical role in splicing or in controlling alternative splice site use of at least some pre-mRNA in vivo. Not required for all splicing. May play a general role in the condensation or decondensation of chromatin. The chain is Serine-arginine protein 55 (B52) from Drosophila melanogaster (Fruit fly).